Here is a 1902-residue protein sequence, read N- to C-terminus: Putative surface cell antigen sca1 (1902 aa).

The signal sequence occupies residues Met-1–Ala-28. 5 disordered regions span residues Gly-140–Pro-273, Gln-420–Ala-485, Thr-707–Ser-729, Asn-858–Asn-885, and Lys-1470–Asp-1548. 2 stretches are compositionally biased toward polar residues: residues Gln-146–Met-159 and Thr-168–His-197. Residues Thr-199–Pro-212 show a composition bias toward low complexity. Residues Leu-225 to Lys-238 show a composition bias toward polar residues. Positions Ser-246–Glu-264 are enriched in low complexity. The span at Phe-423–Gly-439 shows a compositional bias: polar residues. Over residues Lys-445–Ser-482 the composition is skewed to basic and acidic residues. Over residues Arg-863 to Asp-874 the composition is skewed to basic and acidic residues. Residues Leu-1491–Leu-1507 show a composition bias toward low complexity. Over residues Ser-1521 to Thr-1538 the composition is skewed to acidic residues. Residues Glu-1618–Leu-1902 form the Autotransporter domain.

It localises to the cell outer membrane. In Rickettsia conorii (strain ATCC VR-613 / Malish 7), this protein is Putative surface cell antigen sca1 (sca1).